The chain runs to 231 residues: Ribosomal RNA small subunit methyltransferase G (231 aa).

Positions 85, 90, and 154 each coordinate S-adenosyl-L-methionine.

It belongs to the methyltransferase superfamily. RNA methyltransferase RsmG family.

It is found in the cytoplasm. It carries out the reaction guanosine(527) in 16S rRNA + S-adenosyl-L-methionine = N(7)-methylguanosine(527) in 16S rRNA + S-adenosyl-L-homocysteine. Its function is as follows. Specifically methylates the N7 position of guanine in position 527 of 16S rRNA. In Rhodopseudomonas palustris (strain BisA53), this protein is Ribosomal RNA small subunit methyltransferase G.